Here is a 265-residue protein sequence, read N- to C-terminus: Methyl-coenzyme M reductase II subunit gamma (265 aa).

Residue Arg123 coordinates coenzyme M.

It belongs to the methyl-coenzyme M reductase gamma subunit family. MCR is a hexamer of two alpha, two beta, and two gamma chains, forming a dimer of heterotrimers. The cofactor is coenzyme F430.

The catalysed reaction is coenzyme B + methyl-coenzyme M = methane + coenzyme M-coenzyme B heterodisulfide. It participates in one-carbon metabolism; methyl-coenzyme M reduction; methane from methyl-coenzyme M: step 1/1. Its function is as follows. Component of the methyl-coenzyme M reductase (MCR) I that catalyzes the reductive cleavage of methyl-coenzyme M (CoM-S-CH3 or 2-(methylthio)ethanesulfonate) using coenzyme B (CoB or 7-mercaptoheptanoylthreonine phosphate) as reductant which results in the production of methane and the mixed heterodisulfide of CoB and CoM (CoM-S-S-CoB). This is the final step in methanogenesis. This Methanothermobacter thermautotrophicus (strain ATCC 29096 / DSM 1053 / JCM 10044 / NBRC 100330 / Delta H) (Methanobacterium thermoautotrophicum) protein is Methyl-coenzyme M reductase II subunit gamma (mrtG).